A 312-amino-acid polypeptide reads, in one-letter code: uncharacterized protein (312 aa).

8 helical membrane passes run 4–24, 45–65, 75–95, 117–137, 171–191, 217–237, 253–275, and 280–299; these read IFLA…KVIF, LITP…PLVL, IAGI…AVML, VILA…NLIW, GLGV…IQFL, TSMT…GVMI, AFIF…PLGI, and LLLI…AHTW.

It is found in the cell membrane. This is an uncharacterized protein from Bacillus subtilis (strain 168).